A 233-amino-acid chain; its full sequence is Small ribosomal subunit protein uS2 (233 aa).

Belongs to the universal ribosomal protein uS2 family.

The protein is Small ribosomal subunit protein uS2 of Clostridium acetobutylicum (strain ATCC 824 / DSM 792 / JCM 1419 / IAM 19013 / LMG 5710 / NBRC 13948 / NRRL B-527 / VKM B-1787 / 2291 / W).